We begin with the raw amino-acid sequence, 244 residues long: RAD51-like protein 1 (244 aa).

Interacts with brc-2 and rad-51.

Its subcellular location is the nucleus. In terms of biological role, has a role in the homologous recombination repair (HRR) of genomic DNA during meiosis. Required for rad-51 recruitment onto ssDNA gaps generated at stalled replication fork barriers. This chain is RAD51-like protein 1, found in Caenorhabditis briggsae.